The primary structure comprises 692 residues: Translation initiation factor IF-2 (692 aa).

The segment at lysine 51 to threonine 114 is disordered. Positions lysine 59–proline 84 are enriched in low complexity. A compositionally biased stretch (basic residues) spans asparagine 85 to lysine 94. Residues glutamate 193–lysine 362 enclose the tr-type G domain. Residues glycine 202–threonine 209 are G1. GTP is bound at residue glycine 202–threonine 209. The segment at glycine 227–histidine 231 is G2. Positions aspartate 248–glycine 251 are G3. GTP contacts are provided by residues aspartate 248–histidine 252 and asparagine 302–aspartate 305. Residues asparagine 302–aspartate 305 form a G4 region. The G5 stretch occupies residues serine 338 to isoleucine 340.

The protein belongs to the TRAFAC class translation factor GTPase superfamily. Classic translation factor GTPase family. IF-2 subfamily.

The protein localises to the cytoplasm. Functionally, one of the essential components for the initiation of protein synthesis. Protects formylmethionyl-tRNA from spontaneous hydrolysis and promotes its binding to the 30S ribosomal subunits. Also involved in the hydrolysis of GTP during the formation of the 70S ribosomal complex. The chain is Translation initiation factor IF-2 from Oceanobacillus iheyensis (strain DSM 14371 / CIP 107618 / JCM 11309 / KCTC 3954 / HTE831).